The following is a 116-amino-acid chain: Iron-sulfur cluster insertion protein ErpA (116 aa).

Residues cysteine 44, cysteine 108, and cysteine 110 each contribute to the iron-sulfur cluster site.

The protein belongs to the HesB/IscA family. Homodimer. Iron-sulfur cluster is required as a cofactor.

Required for insertion of 4Fe-4S clusters for at least IspG. This chain is Iron-sulfur cluster insertion protein ErpA, found in Francisella tularensis subsp. mediasiatica (strain FSC147).